The primary structure comprises 155 residues: Lipoprotein signal peptidase (155 aa).

The next 4 helical transmembrane spans lie at 7-27 (WFWIVAVIGLILDQVTKYITV), 39-59 (IIPGVFHFTYVINTGAAFSAF), 63-83 (VGWLKWLSLLVSLGLMAFAYF), and 96-116 (GFILAGAFGNGIDRFLFGYVV). Catalysis depends on residues Asp117 and Asp133. Residues 126–146 (FPVFNLADVFINIGIICLLIS) form a helical membrane-spanning segment.

Belongs to the peptidase A8 family.

The protein localises to the cell inner membrane. The enzyme catalyses Release of signal peptides from bacterial membrane prolipoproteins. Hydrolyzes -Xaa-Yaa-Zaa-|-(S,diacylglyceryl)Cys-, in which Xaa is hydrophobic (preferably Leu), and Yaa (Ala or Ser) and Zaa (Gly or Ala) have small, neutral side chains.. It participates in protein modification; lipoprotein biosynthesis (signal peptide cleavage). In terms of biological role, this protein specifically catalyzes the removal of signal peptides from prolipoproteins. The protein is Lipoprotein signal peptidase of Microcystis aeruginosa (strain NIES-843 / IAM M-2473).